The following is an 80-amino-acid chain: Centromere protein X (80 aa).

This sequence belongs to the CENP-X/MHF2 family. Heterodimer with CENPX, sometimes called MHF; this interaction stabilizes both partners. MHF heterodimers can assemble to form tetrameric structures. MHF also coassemble with CENPT-CENPW heterodimers at centromeres to form the tetrameric CENP-T-W-S-X complex. Forms a discrete complex with FANCM and CENPX, called FANCM-MHF; this interaction, probably mediated by direct binding between CENPS and FANCM, leads to synergistic activation of double-stranded DNA binding and strongly stimulates FANCM-mediated DNA remodeling. Recruited by FANCM to the Fanconi anemia (FA) core complex, which consists of CENPS, CENPX, FANCA, FANCB, FANCC, FANCE, FANCF, FANCG, FANCL, FANCM, FAAP24 and FAAP100. The FA core complex associates with Bloom syndrome (BLM) complex, which consists of at least BLM, DNA topoisomerase 3-alpha (TOP3A), RMI1/BLAP75, RPA1/RPA70 and RPA2/RPA32. The super complex between FA and BLM is called BRAFT.

It localises to the nucleus. The protein resides in the chromosome. The protein localises to the centromere. Its subcellular location is the kinetochore. In terms of biological role, DNA-binding component of the Fanconi anemia (FA) core complex. Required for the normal activation of the FA pathway, leading to monoubiquitination of the FANCI-FANCD2 complex in response to DNA damage, cellular resistance to DNA cross-linking drugs, and prevention of chromosomal breakage. In complex with CENPS (MHF heterodimer), crucial cofactor for FANCM in both binding and ATP-dependent remodeling of DNA. Stabilizes FANCM. In complex with CENPS and FANCM (but not other FANC proteins), rapidly recruited to blocked forks and promotes gene conversion at blocked replication forks. In complex with CENPS, CENPT and CENPW (CENP-T-W-S-X heterotetramer), involved in the formation of a functional kinetochore outer plate, which is essential for kinetochore-microtubule attachment and faithful mitotic progression. As a component of MHF and CENP-T-W-S-X complexes, binds DNA and bends it to form a nucleosome-like structure. DNA-binding function is fulfilled in the presence of CENPS, with the following preference for DNA substates: Holliday junction &gt; double-stranded &gt; splay arm &gt; single-stranded. Does not bind DNA on its own. The polypeptide is Centromere protein X (CENPX) (Gallus gallus (Chicken)).